The primary structure comprises 352 residues: Fe(3+) ions import ATP-binding protein FbpC (352 aa).

An ABC transporter domain is found at 5 to 239; the sequence is LHIGHLSKSF…PADLDAVLFI (235 aa). 37-44 contacts ATP; it reads GASGCGKT.

The protein belongs to the ABC transporter superfamily. Fe(3+) ion importer (TC 3.A.1.10) family. The complex is composed of two ATP-binding proteins (FbpC), two transmembrane proteins (FbpB) and a solute-binding protein (FbpA).

Its subcellular location is the cell inner membrane. The enzyme catalyses Fe(3+)(out) + ATP + H2O = Fe(3+)(in) + ADP + phosphate + H(+). Part of the ABC transporter complex FbpABC involved in Fe(3+) ions import. Responsible for energy coupling to the transport system. This is Fe(3+) ions import ATP-binding protein FbpC from Neisseria gonorrhoeae.